Here is a 247-residue protein sequence, read N- to C-terminus: Uridylate kinase (247 aa).

An ATP-binding site is contributed by 11–14; sequence KASG. The involved in allosteric activation by GTP stretch occupies residues 19–24; that stretch reads GKQGFG. A UMP-binding site is contributed by Gly-53. Residues Gly-54 and Arg-58 each contribute to the ATP site. Residues Asp-73 and 134–141 contribute to the UMP site; that span reads TGNPFFTT. Positions 161, 162, 167, and 170 each coordinate ATP.

The protein belongs to the UMP kinase family. As to quaternary structure, homohexamer.

Its subcellular location is the cytoplasm. The catalysed reaction is UMP + ATP = UDP + ADP. It participates in pyrimidine metabolism; CTP biosynthesis via de novo pathway; UDP from UMP (UMPK route): step 1/1. Its activity is regulated as follows. Allosterically activated by GTP. Inhibited by UTP. In terms of biological role, catalyzes the reversible phosphorylation of UMP to UDP. This Chelativorans sp. (strain BNC1) protein is Uridylate kinase.